A 332-amino-acid chain; its full sequence is Sesquiterpene synthase MBR_10393 (332 aa).

Mg(2+)-binding residues include aspartate 91 and aspartate 96. The DDXXXD motif motif lies at 91–96 (DDLFVD). Arginine 184 is a binding site for substrate. Asparagine 230, serine 234, and glutamate 238 together coordinate Mg(2+).

The protein belongs to the terpene synthase family. Mg(2+) is required as a cofactor.

The catalysed reaction is (2E,6E)-farnesyl diphosphate + H2O = (+)-corvol ether B + diphosphate. It catalyses the reaction (2E,6E)-farnesyl diphosphate + H2O = (+)-corvol ether A + diphosphate. Terpene synthase that catalyzes the conversion of (2E,6E)-farnesyl diphosphate (FPP) into sesquiterpenes which are important for fungi-environment interactions. Produces a mixture consisting of 8 sesquiterpenes including corvol ethers A and B, as well as traces of epizonarene, gamma-cadinene, delta-cadinene, alpha-cadinene, alpha-cadinol, and an unidentified sesquiterpene. The major product is corvol ether B. The sequence is that of Sesquiterpene synthase MBR_10393 from Metarhizium brunneum (strain ARSEF 3297).